The following is a 488-amino-acid chain: Germacrene A hydroxylase (488 aa).

The Cytoplasmic segment spans residues 1–6 (MEVSLT). A helical; Signal-anchor for type II membrane protein transmembrane segment spans residues 7-23 (TSIALATIVFFLYKLLT). Over 24-488 (RPTSSKNRLP…KTELMLVPSF (465 aa)) the chain is Lumenal. 4 N-linked (GlcNAc...) asparagine glycosylation sites follow: Asn-169, Asn-260, Asn-379, and Asn-412. Residue Cys-432 participates in heme binding.

It belongs to the cytochrome P450 family. Heme is required as a cofactor. In terms of tissue distribution, expressed in leaf primordia.

The protein localises to the endoplasmic reticulum membrane. It catalyses the reaction (+)-(R)-germacrene A + 3 reduced [NADPH--hemoprotein reductase] + 3 O2 = germacra-1(10),4,11(13)-trien-12-oate + 3 oxidized [NADPH--hemoprotein reductase] + 4 H2O + 4 H(+). Its pathway is secondary metabolite biosynthesis; terpenoid biosynthesis. In terms of biological role, involved in the biosynthesis of germacrene-derived sesquiterpene lactones. Catalyzes three consecutive oxidations of germacrene A to produce germacrene A acid. Could also catalyze the three-step oxidation of non-natural substrate amorphadiene to artemisinic acid. This chain is Germacrene A hydroxylase, found in Helianthus annuus (Common sunflower).